Here is a 62-residue protein sequence, read N- to C-terminus: Large ribosomal subunit protein bL28 (62 aa).

Belongs to the bacterial ribosomal protein bL28 family.

The protein is Large ribosomal subunit protein bL28 of Streptococcus mutans serotype c (strain ATCC 700610 / UA159).